Reading from the N-terminus, the 657-residue chain is tRNA 5-methylaminomethyl-2-thiouridine biosynthesis bifunctional protein MnmC (657 aa).

Residues 1-236 form a tRNA (mnm(5)s(2)U34)-methyltransferase region; it reads MPDRLVPATL…KRAMLVGEYA (236 aa). Positions 261–657 are FAD-dependent cmnm(5)s(2)U34 oxidoreductase; that stretch reads IGAGVAGCAV…LRARQVSAAD (397 aa).

This sequence in the N-terminal section; belongs to the methyltransferase superfamily. tRNA (mnm(5)s(2)U34)-methyltransferase family. In the C-terminal section; belongs to the DAO family. Requires FAD as cofactor.

It localises to the cytoplasm. It carries out the reaction 5-aminomethyl-2-thiouridine(34) in tRNA + S-adenosyl-L-methionine = 5-methylaminomethyl-2-thiouridine(34) in tRNA + S-adenosyl-L-homocysteine + H(+). Catalyzes the last two steps in the biosynthesis of 5-methylaminomethyl-2-thiouridine (mnm(5)s(2)U) at the wobble position (U34) in tRNA. Catalyzes the FAD-dependent demodification of cmnm(5)s(2)U34 to nm(5)s(2)U34, followed by the transfer of a methyl group from S-adenosyl-L-methionine to nm(5)s(2)U34, to form mnm(5)s(2)U34. This Burkholderia multivorans (strain ATCC 17616 / 249) protein is tRNA 5-methylaminomethyl-2-thiouridine biosynthesis bifunctional protein MnmC.